The chain runs to 484 residues: Dolichyl-P-Man:Man5GlcNAc2-PP-dolichol alpha-1,3-mannosyltransferase l(2)not2 (484 aa).

Residues 1–43 (MAPPKAASHRPAVRRKKSGTLVDSILDKYLNVRFFKYLLLEPA) lie on the Cytoplasmic side of the membrane. The helical transmembrane segment at 44–64 (ALPIVGLFVLLAELVINVVVI) threads the bilayer. Topologically, residues 65–97 (QRVPYTEIDWVAYMQECEGFLNGTTNYSLLRGD) are lumenal. The helical transmembrane segment at 98 to 118 (TGPLVYPAAFVYIYSALYYVT) threads the bilayer. Residues 119–125 (SHGTNVR) lie on the Cytoplasmic side of the membrane. A helical transmembrane segment spans residues 126 to 146 (LAQYIFAGIYLLQLALVLRLY). Residues 147 to 171 (SKSRKVPPYVLVLSAFTSYRIHSIY) lie on the Lumenal side of the membrane. The helical transmembrane segment at 172-192 (VLRLFNDPVAVLLLYAALNLF) threads the bilayer. Residues 193-211 (LDRRWTLGSTFFSLAVGVK) lie on the Cytoplasmic side of the membrane. Residues 212 to 232 (MNILLFAPALLLFYLANLGLL) traverse the membrane as a helical segment. Residue arginine 233 is a topological domain, lumenal. Residues 234 to 254 (TILQLAVCGVIQLLLGAPFLL) form a helical membrane-spanning segment. The Cytoplasmic portion of the chain corresponds to 255–294 (THPVEYLRGSFDLGRIFEHKWTVNYRFLSRDVFENRTFHV). A helical transmembrane segment spans residues 295–315 (SLLGLHLLLLLAFAKPTWTFF). Residues 316–403 (QSYVRLRRIE…YGIHFDRCTQ (88 aa)) lie on the Lumenal side of the membrane. Residues 404 to 424 (LALLPFFLCNLVGVACSRSLH) traverse the membrane as a helical segment. The Cytoplasmic portion of the chain corresponds to 425 to 426 (YQ). The helical transmembrane segment at 427 to 447 (FYVWYFHSLPYLAWSTPYSLG) threads the bilayer. The Lumenal segment spans residues 448–484 (VRCLILGLIEYCWNTYPSTNFSSAALHFTHIIPPYQL).

Belongs to the glycosyltransferase ALG3 family.

It localises to the endoplasmic reticulum membrane. It catalyses the reaction an alpha-D-Man-(1-&gt;2)-alpha-D-Man-(1-&gt;2)-alpha-D-Man-(1-&gt;3)-[alpha-D-Man-(1-&gt;6)]-beta-D-Man-(1-&gt;4)-beta-D-GlcNAc-(1-&gt;4)-alpha-D-GlcNAc-diphospho-di-trans,poly-cis-dolichol + a di-trans,poly-cis-dolichyl beta-D-mannosyl phosphate = an alpha-D-Man-(1-&gt;2)-alpha-D-Man-(1-&gt;2)-alpha-D-Man-(1-&gt;3)-[alpha-D-Man-(1-&gt;3)-alpha-D-Man-(1-&gt;6)]-beta-D-Man-(1-&gt;4)-beta-D-GlcNAc-(1-&gt;4)-alpha-D-GlcNAc-diphospho-di-trans,poly-cis-dolichol + a di-trans,poly-cis-dolichyl phosphate + H(+). It participates in protein modification; protein glycosylation. Probable alpha-1,3-mannosyltransferase involved in the N-glycosylation pathway. Involved in glycosylation of the TNF receptor grnd, regulating its ligand affinity. Required for normal epithelial growth and architecture. Suppressor of JNK-dependent intestinal stem cell proliferation. The sequence is that of Dolichyl-P-Man:Man5GlcNAc2-PP-dolichol alpha-1,3-mannosyltransferase l(2)not2 from Drosophila melanogaster (Fruit fly).